Reading from the N-terminus, the 309-residue chain is ESX-3 secretion system protein EccE3 (309 aa).

2 helical membrane-spanning segments follow: residues isoleucine 5 to threonine 25 and valine 29 to leucine 49.

It belongs to the EccE family. As to quaternary structure, part of the ESX-3 / type VII secretion system (T7SS), which is composed of cytosolic and membrane components. The ESX-3 membrane complex is composed of EccB3, EccC3, EccD3 and EccE3.

It is found in the cell inner membrane. Part of the ESX-3 specialized secretion system, which is required for siderophore-mediated iron acquisition and for the secretion of EsxH and EsxG. The protein is ESX-3 secretion system protein EccE3 of Mycolicibacterium smegmatis (strain ATCC 700084 / mc(2)155) (Mycobacterium smegmatis).